The following is an 83-amino-acid chain: Small ribosomal subunit protein bS18A (83 aa).

This sequence belongs to the bacterial ribosomal protein bS18 family. As to quaternary structure, part of the 30S ribosomal subunit. Forms a tight heterodimer with protein bS6.

Its function is as follows. Binds as a heterodimer with protein bS6 to the central domain of the 16S rRNA, where it helps stabilize the platform of the 30S subunit. The polypeptide is Small ribosomal subunit protein bS18A (Mycolicibacterium vanbaalenii (strain DSM 7251 / JCM 13017 / BCRC 16820 / KCTC 9966 / NRRL B-24157 / PYR-1) (Mycobacterium vanbaalenii)).